Consider the following 93-residue polypeptide: Small ribosomal subunit protein uS19 (93 aa).

The protein belongs to the universal ribosomal protein uS19 family.

Its function is as follows. Protein S19 forms a complex with S13 that binds strongly to the 16S ribosomal RNA. The protein is Small ribosomal subunit protein uS19 of Helicobacter pylori (strain G27).